A 641-amino-acid chain; its full sequence is 1-deoxy-D-xylulose-5-phosphate synthase (641 aa).

Residues His79 and Gly120 to Ser122 contribute to the thiamine diphosphate site. Asp151 serves as a coordination point for Mg(2+). Thiamine diphosphate contacts are provided by residues Gly152 to Ser153, Asn180, Tyr291, and Glu375. Residue Asn180 coordinates Mg(2+).

This sequence belongs to the transketolase family. DXPS subfamily. Homodimer. Requires Mg(2+) as cofactor. It depends on thiamine diphosphate as a cofactor.

The enzyme catalyses D-glyceraldehyde 3-phosphate + pyruvate + H(+) = 1-deoxy-D-xylulose 5-phosphate + CO2. The protein operates within metabolic intermediate biosynthesis; 1-deoxy-D-xylulose 5-phosphate biosynthesis; 1-deoxy-D-xylulose 5-phosphate from D-glyceraldehyde 3-phosphate and pyruvate: step 1/1. Its function is as follows. Catalyzes the acyloin condensation reaction between C atoms 2 and 3 of pyruvate and glyceraldehyde 3-phosphate to yield 1-deoxy-D-xylulose-5-phosphate (DXP). This Nitratidesulfovibrio vulgaris (strain ATCC 29579 / DSM 644 / CCUG 34227 / NCIMB 8303 / VKM B-1760 / Hildenborough) (Desulfovibrio vulgaris) protein is 1-deoxy-D-xylulose-5-phosphate synthase.